Here is a 210-residue protein sequence, read N- to C-terminus: Keratin-associated protein 4-9 (210 aa).

28 repeat units span residues 24–28 (CCRPS), 29–33 (CCETT), 34–38 (CCRTT), 39–43 (CCRPS), 44–48 (CCVSS), 49–53 (CCRPQ), 54–58 (CCQSV), 59–63 (CCQPT), 69–73 (CCQTT), 74–78 (CCRTT), 84–88 (CCVSS), 89–93 (CCRPQ), 94–98 (CCQPA), 99–103 (CCQPT), 104–108 (CCRPS), 109–113 (CCETT), 114–118 (CCHPR), 119–123 (CCISS), 124–128 (CCRPS), 129–133 (CCVSS), 134–138 (CCKPQ), 139–143 (CCQSV), 144–148 (CCQPN), 149–153 (CCRPS), 159–163 (CCRPS), 164–168 (CCESS), 169–173 (CCRPC), and 174–178 (CCVRP). A 29 X 5 AA repeats of C-C-[RQVHIEK]-[SPTR]-[VSTQCRNP] region spans residues 24-178 (CCRPSCCETT…CCRPCCCVRP (155 aa)).

This sequence belongs to the KRTAP type 4 family. In terms of assembly, interacts with hair keratins. As to expression, expressed in the hair follicles.

Functionally, in the hair cortex, hair keratin intermediate filaments are embedded in an interfilamentous matrix, consisting of hair keratin-associated proteins (KRTAP), which are essential for the formation of a rigid and resistant hair shaft through their extensive disulfide bond cross-linking with abundant cysteine residues of hair keratins. The matrix proteins include the high-sulfur and high-glycine-tyrosine keratins. In Homo sapiens (Human), this protein is Keratin-associated protein 4-9 (KRTAP4-9).